Consider the following 41-residue polypeptide: Large ribosomal subunit protein bL36 (41 aa).

This sequence belongs to the bacterial ribosomal protein bL36 family.

The protein is Large ribosomal subunit protein bL36 of Rhodopseudomonas palustris (strain BisB18).